The primary structure comprises 226 residues: Imidazoleglycerol-phosphate dehydratase (226 aa).

Positions 23–55 are disordered; that stretch reads LTGGPIERPQPSLFASEKGANTAGPDDASQTTA.

It belongs to the imidazoleglycerol-phosphate dehydratase family.

The catalysed reaction is D-erythro-1-(imidazol-4-yl)glycerol 3-phosphate = 3-(imidazol-4-yl)-2-oxopropyl phosphate + H2O. It participates in amino-acid biosynthesis; L-histidine biosynthesis; L-histidine from 5-phospho-alpha-D-ribose 1-diphosphate: step 6/9. This Maudiozyma humilis (Sour dough yeast) protein is Imidazoleglycerol-phosphate dehydratase (HIS3).